The primary structure comprises 415 residues: Gamma-glutamyl phosphate reductase (415 aa).

The protein belongs to the gamma-glutamyl phosphate reductase family.

Its subcellular location is the cytoplasm. It carries out the reaction L-glutamate 5-semialdehyde + phosphate + NADP(+) = L-glutamyl 5-phosphate + NADPH + H(+). The protein operates within amino-acid biosynthesis; L-proline biosynthesis; L-glutamate 5-semialdehyde from L-glutamate: step 2/2. Its function is as follows. Catalyzes the NADPH-dependent reduction of L-glutamate 5-phosphate into L-glutamate 5-semialdehyde and phosphate. The product spontaneously undergoes cyclization to form 1-pyrroline-5-carboxylate. This chain is Gamma-glutamyl phosphate reductase, found in Cutibacterium acnes (strain DSM 16379 / KPA171202) (Propionibacterium acnes).